A 536-amino-acid polypeptide reads, in one-letter code: MEQFGVRNPAIELDSIGLGAAASVRYNLLESHLYEEAIRRREADLTAHGALRALTGQHTGRSPKDKFVVRNAVTEDQIWWDNNKPMSPEHFALLHKDMLAHVHGKDLFVQDLIGGADHDYALPTRVVTEFAWHSLFIRNLLIRPERSALESFAPKLTIIDLPSFRADPERHGCRTETVIACDLVNGIVLIGGTSYAGEMKKSVFTVLNYLLPERGVMPMHCSANVGPEGDAAIFFGLSGTGKTTLSADPTRTLIGDDEHGWGENGIFNFEGGCYAKTIRLSAEAEPEIYETTRRFGTVLENVVLDEHGVPDLDDGSLTENTRSAYPLDFIPNASESGMTGHPETIIMLTADAFGVMPPIARLTPEQAMYHFLSGYTAKVAGTEKGVVEPEATFSTCFGAPFMPRHPTEYGNLLKELIARHGAGCWLVNTGWTGGAYGTGRRMPIKATRALLAAALKGDLDKAEFRIDPNFGFAVPVAVEGVDSAILDPRSTWADGQAYDAQAAKLVQMFVSNFAKFEDHVDGNVRDAAPGLRAAAE.

3 residues coordinate substrate: Arg61, Tyr195, and Lys201. ATP is bound by residues Lys201, His220, and 236–244 (GLSGTGKTT). Residues Lys201 and His220 each contribute to the Mn(2+) site. Mn(2+) is bound at residue Asp257. Residues Glu285, Arg322, and Thr447 each contribute to the ATP site. Arg322 is a substrate binding site.

Belongs to the phosphoenolpyruvate carboxykinase (ATP) family. Requires Mn(2+) as cofactor.

It is found in the cytoplasm. It carries out the reaction oxaloacetate + ATP = phosphoenolpyruvate + ADP + CO2. It functions in the pathway carbohydrate biosynthesis; gluconeogenesis. Functionally, involved in the gluconeogenesis. Catalyzes the conversion of oxaloacetate (OAA) to phosphoenolpyruvate (PEP) through direct phosphoryl transfer between the nucleoside triphosphate and OAA. In Rhizobium rhizogenes (strain K84 / ATCC BAA-868) (Agrobacterium radiobacter), this protein is Phosphoenolpyruvate carboxykinase (ATP).